The sequence spans 509 residues: Maturase K (509 aa).

It belongs to the intron maturase 2 family. MatK subfamily.

The protein resides in the plastid. The protein localises to the chloroplast. Functionally, usually encoded in the trnK tRNA gene intron. Probably assists in splicing its own and other chloroplast group II introns. The polypeptide is Maturase K (Arpophyllum giganteum (Hyacinth orchid)).